Here is a 697-residue protein sequence, read N- to C-terminus: Glycine--tRNA ligase beta subunit (697 aa).

This sequence belongs to the class-II aminoacyl-tRNA synthetase family. As to quaternary structure, tetramer of two alpha and two beta subunits.

It localises to the cytoplasm. It catalyses the reaction tRNA(Gly) + glycine + ATP = glycyl-tRNA(Gly) + AMP + diphosphate. The protein is Glycine--tRNA ligase beta subunit of Solidesulfovibrio magneticus (strain ATCC 700980 / DSM 13731 / RS-1) (Desulfovibrio magneticus).